A 1405-amino-acid chain; its full sequence is DNA-directed RNA polymerase subunit beta' (1405 aa).

Residues cysteine 71, cysteine 73, cysteine 86, and cysteine 89 each coordinate Zn(2+). 3 residues coordinate Mg(2+): aspartate 462, aspartate 464, and aspartate 466. The Zn(2+) site is built by cysteine 820, cysteine 893, cysteine 900, and cysteine 903.

Belongs to the RNA polymerase beta' chain family. The RNAP catalytic core consists of 2 alpha, 1 beta, 1 beta' and 1 omega subunit. When a sigma factor is associated with the core the holoenzyme is formed, which can initiate transcription. Mg(2+) serves as cofactor. Requires Zn(2+) as cofactor.

The enzyme catalyses RNA(n) + a ribonucleoside 5'-triphosphate = RNA(n+1) + diphosphate. DNA-dependent RNA polymerase catalyzes the transcription of DNA into RNA using the four ribonucleoside triphosphates as substrates. The protein is DNA-directed RNA polymerase subunit beta' of Methylorubrum extorquens (strain CM4 / NCIMB 13688) (Methylobacterium extorquens).